The primary structure comprises 173 residues: Protein tyrosine phosphatase type IVA 3 (173 aa).

The Tyrosine-protein phosphatase domain occupies 8–161 (APVEVSYKNM…YRPKQRLRFK (154 aa)). A disulfide bridge connects residues C49 and C104. Residue D72 is the Proton donor of the active site. The active-site Phosphocysteine intermediate is the C104. R110 serves as a coordination point for substrate. A Cysteine methyl ester modification is found at C170. C170 carries the S-farnesyl cysteine lipid modification. A propeptide spans 171–173 (CIM) (removed in mature form).

Belongs to the protein-tyrosine phosphatase family. In terms of assembly, interacts with tubulin. Farnesylated. Farnesylation is required for membrane targeting. Unfarnesylated forms are shifted into the nucleus.

It is found in the cell membrane. Its subcellular location is the early endosome. The catalysed reaction is O-phospho-L-tyrosyl-[protein] + H2O = L-tyrosyl-[protein] + phosphate. With respect to regulation, inhibited by sodium orthovanadate and peroxovanadium compounds, and by pentamidine. In terms of biological role, protein tyrosine phosphatase which stimulates progression from G1 into S phase during mitosis. Enhances cell proliferation, cell motility and invasive activity, and promotes cancer metastasis. May be involved in the progression of cardiac hypertrophy by inhibiting intracellular calcium mobilization in response to angiotensin II. This chain is Protein tyrosine phosphatase type IVA 3 (PTP4A3), found in Bos taurus (Bovine).